A 264-amino-acid polypeptide reads, in one-letter code: NADH dehydrogenase [ubiquinone] iron-sulfur protein 3, mitochondrial (264 aa).

A mitochondrion-targeting transit peptide spans Met1 to Arg36.

The protein belongs to the complex I 30 kDa subunit family. In terms of assembly, core subunit of respiratory chain NADH dehydrogenase (Complex I) which is composed of 45 different subunits. Interacts with NDUFAF3. Interacts with RAB5IF. Found in subcomplexes containing subunits NDUFS2, MT-ND1 and NDUFA13.

The protein resides in the mitochondrion inner membrane. The enzyme catalyses a ubiquinone + NADH + 5 H(+)(in) = a ubiquinol + NAD(+) + 4 H(+)(out). In terms of biological role, core subunit of the mitochondrial membrane respiratory chain NADH dehydrogenase (Complex I) which catalyzes electron transfer from NADH through the respiratory chain, using ubiquinone as an electron acceptor. Essential for the catalytic activity and assembly of complex I. This Pan troglodytes (Chimpanzee) protein is NADH dehydrogenase [ubiquinone] iron-sulfur protein 3, mitochondrial (NDUFS3).